A 271-amino-acid chain; its full sequence is Phosphonates import ATP-binding protein PhnC 2 (271 aa).

In terms of domain architecture, ABC transporter spans 2-245 (LVVEGLTCRF…IARELYDLEA (244 aa)). An ATP-binding site is contributed by 34 to 41 (GRSGAGKS).

Belongs to the ABC transporter superfamily. Phosphonates importer (TC 3.A.1.9.1) family. In terms of assembly, the complex is composed of two ATP-binding proteins (PhnC), two transmembrane proteins (PhnE) and a solute-binding protein (PhnD).

It is found in the cell inner membrane. The enzyme catalyses phosphonate(out) + ATP + H2O = phosphonate(in) + ADP + phosphate + H(+). In terms of biological role, part of the ABC transporter complex PhnCDE involved in phosphonates import. Responsible for energy coupling to the transport system. The sequence is that of Phosphonates import ATP-binding protein PhnC 2 from Rhodopseudomonas palustris (strain BisB18).